A 727-amino-acid polypeptide reads, in one-letter code: Two-component response regulator-like APRR7 (727 aa).

The interval 1–47 (MNANEEGEGSRYPITDRKTGETKFDRVESRTEKHSEEEKTNGITMDV) is disordered. The segment covering 14-40 (ITDRKTGETKFDRVESRTEKHSEEEKT) has biased composition (basic and acidic residues). The 119-residue stretch at 79–197 (RVLLVENDDC…ELKILWQHVW (119 aa)) folds into the Response regulatory domain. 6 disordered regions span residues 203 to 265 (SSGS…KKAV), 291 to 312 (NPEF…QEHD), 339 to 416 (KDEP…KTLD), 464 to 487 (SRYN…SLQD), 509 to 560 (ESLP…QPLP), and 606 to 670 (VNGS…SQRE). A compositionally biased stretch (low complexity) spans 246–259 (ASDGSSDGSGAQSS). 3 stretches are compositionally biased toward polar residues: residues 344–353 (SKTTGIMRQD), 467–487 (NPAS…SLQD), and 519–535 (VGSN…NNAF). A compositionally biased stretch (low complexity) spans 538-555 (PGAPKVSSAGSSSVKHSS). Gly residues predominate over residues 641–657 (GKNGNGDGSGSGSGSGS). Residues 669-711 (REAALTKFRQKRKERCFRKKVRYQSRKKLAEQRPRVRGQFVRK) form the CCT domain.

It belongs to the ARR-like family. In terms of processing, phosphorylated. Phosphorylation varies throughout the diurnal cycle.

Its subcellular location is the nucleus. Transcriptional repressor of CCA1 and LHY, and positive regulator of LWD1 and LWD2 expression. Represses the expression of other clock proteins and master regulators of plant growth, development and response to abiotic stress. Involved in the positive and negative feedback loops of the circadian clock. Controls photoperiodic flowering response and temperature compensation. Expression of several members of the ARR-like family is controlled by circadian rhythm. APRR9, APRR7, and APRR5 coordinately act on the upstream region of the target genes to repress their expression from noon until midnight. The particular coordinated sequential expression of APRR9, APRR7, APRR5, APRR3 and APPR1 result to circadian waves that may be at the basis of the endogenous circadian clock. The chain is Two-component response regulator-like APRR7 (APRR7) from Arabidopsis thaliana (Mouse-ear cress).